The sequence spans 176 residues: Cytochrome c-552 (176 aa).

The chain crosses the membrane as a helical; Signal-anchor span at residues 12–32; the sequence is GALIGSLLFLLLMSWAASGIF. Positions 90, 93, 94, 126, and 154 each coordinate heme c.

Post-translationally, binds 1 heme c group covalently per subunit.

It localises to the cell membrane. Mediates the electron transport between the cytochrome bc1 complex and cytochrome-c oxidase. In Paracoccus denitrificans, this protein is Cytochrome c-552 (cycM).